A 138-amino-acid chain; its full sequence is Putative acyl-CoA thioesterase YneP (138 aa).

The active site involves Asp16.

This sequence belongs to the 4-hydroxybenzoyl-CoA thioesterase family.

In terms of biological role, has acyl-CoA thioesterase activity. The sequence is that of Putative acyl-CoA thioesterase YneP (yneP) from Bacillus subtilis (strain 168).